Here is a 398-residue protein sequence, read N- to C-terminus: 1-deoxy-D-xylulose 5-phosphate reductoisomerase (398 aa).

Residues Thr-10, Gly-11, Ser-12, Ile-13, Lys-37, Asn-38, and Asn-124 each contribute to the NADPH site. Lys-125 lines the 1-deoxy-D-xylulose 5-phosphate pocket. Glu-126 provides a ligand contact to NADPH. Mn(2+) is bound at residue Asp-150. The 1-deoxy-D-xylulose 5-phosphate site is built by Ser-151, Glu-152, Ser-186, and His-209. Residue Glu-152 participates in Mn(2+) binding. Gly-215 serves as a coordination point for NADPH. 1-deoxy-D-xylulose 5-phosphate-binding residues include Ser-222, Asn-227, Lys-228, and Glu-231. Position 231 (Glu-231) interacts with Mn(2+).

This sequence belongs to the DXR family. Homodimer. The cofactor is Mg(2+). It depends on Mn(2+) as a cofactor.

The enzyme catalyses 2-C-methyl-D-erythritol 4-phosphate + NADP(+) = 1-deoxy-D-xylulose 5-phosphate + NADPH + H(+). It functions in the pathway isoprenoid biosynthesis; isopentenyl diphosphate biosynthesis via DXP pathway; isopentenyl diphosphate from 1-deoxy-D-xylulose 5-phosphate: step 1/6. Catalyzes the NADPH-dependent rearrangement and reduction of 1-deoxy-D-xylulose-5-phosphate (DXP) to 2-C-methyl-D-erythritol 4-phosphate (MEP). This is 1-deoxy-D-xylulose 5-phosphate reductoisomerase from Buchnera aphidicola subsp. Acyrthosiphon pisum (strain 5A).